Here is a 257-residue protein sequence, read N- to C-terminus: MARKFNSLAFIASPAEEAQKAAEDLRAVYGDHDPDKADVIVALGGDGFMLHTLHRTMNTGKLVYGMNRGSVGFLMNRYSTENLHQRIANADENAFHPLEMRTTDVNGDKFTALAINEVYLFRQSYQAAKLKVMVDGKTRLDELTCDGLLLATPAGSTAYNLSAHGPILPLEAPLLALTPVSPFRPRRWRGALLPNHVTVDIEILEADKRPVNAVADHQEVKSVVHVRIAESEKLTARILSDPDHSWSDRILAEQFSN.

The active-site Proton acceptor is the D46. NAD(+) is bound by residues 46–47, H51, 116–117, D146, A154, 157–162, and Q218; these read DG, NE, and TAYNLS.

Belongs to the NAD kinase family. Requires a divalent metal cation as cofactor.

It localises to the cytoplasm. It carries out the reaction NAD(+) + ATP = ADP + NADP(+) + H(+). Involved in the regulation of the intracellular balance of NAD and NADP, and is a key enzyme in the biosynthesis of NADP. Catalyzes specifically the phosphorylation on 2'-hydroxyl of the adenosine moiety of NAD to yield NADP. The chain is NAD kinase from Rhizobium meliloti (strain 1021) (Ensifer meliloti).